A 562-amino-acid polypeptide reads, in one-letter code: Calmodulin-binding protein 60 F (562 aa).

A disordered region spans residues 1-22 (MENSMNNRGHGHNQEHADNLPE). The segment at 5-84 (MNNRGHGHNQ…STSRSTEPNK (80 aa)) is calmodulin-binding. A compositionally biased stretch (basic and acidic residues) spans 12–22 (HNQEHADNLPE). Residues 154–273 (EDDKDWTREH…ALHKKLLKSN (120 aa)) are DNA-binding.

The protein belongs to the plant ACBP60 protein family. Interacts with calmodulin (CaM).

The protein resides in the nucleus. Its function is as follows. Transcription activator that binds DNA in a sequence-specific manner, likely 5'-GAAATTTTGG-3', to promote the expression of target genes. In Arabidopsis thaliana (Mouse-ear cress), this protein is Calmodulin-binding protein 60 F.